Consider the following 91-residue polypeptide: Acyl-CoA-binding domain-containing protein 2 (91 aa).

Residues 3-88 (LQEEFEEFAE…VKQLLEEASA (86 aa)) enclose the ACB domain. An acyl-CoA is bound by residues lysine 15, 30–34 (YGLYK), lysine 52, lysine 56, and tyrosine 75.

Belongs to the ACBP family. As to expression, highly expressed in leaves. Expressed at low levels in roots and seeds.

The protein resides in the cytoplasm. It is found in the cytosol. Functionally, binds medium- and long-chain acyl-CoA esters with high affinity. Can interact in vitro with linolenoyl-CoA. Binds palmitoyl-CoA and linoleoyl-CoA in vitro. Binds phosphatidic acid (PA) and phosphatidylcholine (PC) in vitro. May play a role in the biosynthesis of phospholipids. The chain is Acyl-CoA-binding domain-containing protein 2 from Oryza sativa subsp. japonica (Rice).